Reading from the N-terminus, the 361-residue chain is UDP-3-O-acylglucosamine N-acyltransferase (361 aa).

H253 acts as the Proton acceptor in catalysis.

It belongs to the transferase hexapeptide repeat family. LpxD subfamily. As to quaternary structure, homotrimer.

It carries out the reaction a UDP-3-O-[(3R)-3-hydroxyacyl]-alpha-D-glucosamine + a (3R)-hydroxyacyl-[ACP] = a UDP-2-N,3-O-bis[(3R)-3-hydroxyacyl]-alpha-D-glucosamine + holo-[ACP] + H(+). It participates in bacterial outer membrane biogenesis; LPS lipid A biosynthesis. Catalyzes the N-acylation of UDP-3-O-acylglucosamine using 3-hydroxyacyl-ACP as the acyl donor. Is involved in the biosynthesis of lipid A, a phosphorylated glycolipid that anchors the lipopolysaccharide to the outer membrane of the cell. This Burkholderia mallei (strain ATCC 23344) protein is UDP-3-O-acylglucosamine N-acyltransferase.